The sequence spans 166 residues: Thioredoxin, mitochondrial (166 aa).

The N-terminal 59 residues, 1–59 (MAQRLLLRRFLTSVISRKPPQGVWASLTSTSLQTPPYNAGGLTGTPSPARTFHTTRVCS), are a transit peptide targeting the mitochondrion. In terms of domain architecture, Thioredoxin spans 61 to 166 (TFNVQDGPDF…LEAFLKKLIG (106 aa)). Active-site nucleophile residues include cysteine 90 and cysteine 93. A disulfide bridge connects residues cysteine 90 and cysteine 93. At lysine 152 the chain carries N6-acetyllysine; alternate. Lysine 152 bears the N6-succinyllysine; alternate mark.

This sequence belongs to the thioredoxin family. In terms of assembly, monomer. In terms of tissue distribution, expressed in several tissues with the highest expression levels in heart, muscle, kidney and adrenal gland.

The protein localises to the mitochondrion. In terms of biological role, important for the control of mitochondrial reactive oxygen species homeostasis, apoptosis regulation and cell viability. Is involved in various redox reactions including the reduction of protein disulfide bonds, through the reversible oxidation of its active center dithiol to a disulfide. The protein is Thioredoxin, mitochondrial (Txn2) of Rattus norvegicus (Rat).